The following is a 180-amino-acid chain: Cytidylate kinase 2 (180 aa).

An ATP-binding site is contributed by 7-15 (GKSGCGNTT).

The protein belongs to the cytidylate kinase family. Type 2 subfamily.

Its subcellular location is the cytoplasm. The catalysed reaction is CMP + ATP = CDP + ADP. The enzyme catalyses dCMP + ATP = dCDP + ADP. The polypeptide is Cytidylate kinase 2 (cmk2) (Borreliella burgdorferi (strain ATCC 35210 / DSM 4680 / CIP 102532 / B31) (Borrelia burgdorferi)).